Consider the following 285-residue polypeptide: Nucleotide-binding protein Avin_12760 (285 aa).

Residue 8 to 15 (GRSGSGKS) coordinates ATP. 60–63 (DARN) is a binding site for GTP.

Belongs to the RapZ-like family.

Displays ATPase and GTPase activities. This is Nucleotide-binding protein Avin_12760 from Azotobacter vinelandii (strain DJ / ATCC BAA-1303).